The chain runs to 252 residues: Homeobox protein EMX2 (252 aa).

A DNA-binding region (homeobox) is located at residues P154–K213. The segment at Q212–D252 is disordered. Residues K224–R233 are compositionally biased toward basic residues.

It belongs to the EMX homeobox family. As to quaternary structure, interacts with translation initiation factor EIF4E. Cerebral cortex.

The protein localises to the nucleus. The protein resides in the cell projection. Its subcellular location is the axon. Transcription factor, which in cooperation with EMX1, acts to generate the boundary between the roof and archipallium in the developing brain. May function in combination with OTX1/2 to specify cell fates in the developing central nervous system. In the inner ear, it controls the distribution of GPR156 at hair cell boundaries, and regulates the organization of stereociliary bundles in opposite orientations across the line of polarity reversal (LPR). In Homo sapiens (Human), this protein is Homeobox protein EMX2 (EMX2).